A 66-amino-acid chain; its full sequence is Delta-buthitoxin-Hj1a (66 aa).

The region spanning 4–66 (RDAYIAQPHN…EPIKVPGKCH (63 aa)) is the LCN-type CS-alpha/beta domain. 4 disulfide bridges follow: Cys-14–Cys-65, Cys-18–Cys-38, Cys-24–Cys-48, and Cys-28–Cys-50.

This sequence belongs to the long (4 C-C) scorpion toxin superfamily. Sodium channel inhibitor family. Alpha subfamily. Expressed by the venom gland.

Its subcellular location is the secreted. This recombinant toxin slows fast inactivation on Nav1.1/SCN1A (EC(50)=17 nM), Nav1.4/SN4A (EC(50)=7.5 nM), Nav1.5/SCN5A (EC(50)=9.2 nM) and Nav1.6/SCN8A (EC(50)=37.3 nM) voltage-gated sodium channels. On Nav1.1/SCN1A channel, it acts as an agonist by inducing a shift in both the voltage dependence of channel inactivation (alpha-toxin activity) and activation (beta-toxin activity). In vivo, shows moderate insecticidal activities. It induces irreversible paralysis in blowflies and lethal effects in D.melanogaster. The chain is Delta-buthitoxin-Hj1a from Hottentotta judaicus (Black scorpion).